Reading from the N-terminus, the 296-residue chain is Glycine--tRNA ligase alpha subunit (296 aa).

Belongs to the class-II aminoacyl-tRNA synthetase family. Tetramer of two alpha and two beta subunits.

The protein resides in the cytoplasm. It catalyses the reaction tRNA(Gly) + glycine + ATP = glycyl-tRNA(Gly) + AMP + diphosphate. This Desulfitobacterium hafniense (strain Y51) protein is Glycine--tRNA ligase alpha subunit.